A 241-amino-acid chain; its full sequence is Glycerol-3-phosphate acyltransferase (241 aa).

6 consecutive transmembrane segments (helical) span residues 3–23 (ILYS…LLGS), 63–83 (IVFA…SAIV), 97–117 (YISP…PAYY), 131–151 (LIIS…LLVV), 156–176 (IVSL…WMPW), and 198–218 (LVNY…LVLV).

Belongs to the PlsY family. Probably interacts with PlsX.

It localises to the cell membrane. It carries out the reaction an acyl phosphate + sn-glycerol 3-phosphate = a 1-acyl-sn-glycero-3-phosphate + phosphate. The protein operates within lipid metabolism; phospholipid metabolism. Catalyzes the transfer of an acyl group from acyl-phosphate (acyl-PO(4)) to glycerol-3-phosphate (G3P) to form lysophosphatidic acid (LPA). This enzyme utilizes acyl-phosphate as fatty acyl donor, but not acyl-CoA or acyl-ACP. This Mycoplasmopsis agalactiae (strain NCTC 10123 / CIP 59.7 / PG2) (Mycoplasma agalactiae) protein is Glycerol-3-phosphate acyltransferase.